The chain runs to 370 residues: Protein-tyrosine sulfotransferase 1 (370 aa).

The Cytoplasmic segment spans residues 1 to 8; sequence MVGKLKQN. Residues 9–25 traverse the membrane as a helical; Signal-anchor for type II membrane protein segment; sequence LLLACLVISSVTVFYLG. Topologically, residues 26-370 are lumenal; that stretch reads QHAMECHHRI…KEKPQTEQVE (345 aa). Residue Asn60 is glycosylated (N-linked (GlcNAc...) asparagine). Residue 79-83 participates in 3'-phosphoadenylyl sulfate binding; that stretch reads RSGTT. Cys97 and Cys157 are disulfide-bonded. Catalysis depends on Glu100, which acts as the Proton donor/acceptor. Residues 102 to 106 are interaction with peptide substrate; the sequence is RVIPR. Arg184, Ser192, and Arg196 together coordinate 3'-phosphoadenylyl sulfate. The cysteines at positions 226 and 234 are disulfide-linked. Residue Tyr239 participates in 3'-phosphoadenylyl sulfate binding. An N-linked (GlcNAc...) asparagine glycan is attached at Asn262. 3'-phosphoadenylyl sulfate is bound by residues 286-295 and Lys301; that span reads STDQVIKPVN.

Belongs to the protein sulfotransferase family. In terms of assembly, homodimer. Can also form heterodimers with TPST2. In terms of processing, N-glycosylated. In terms of tissue distribution, ubiquitous. Detected in heart, brain, placenta, lung, liver, skeletal muscle, kidney and pancreas.

It localises to the golgi apparatus membrane. The enzyme catalyses L-tyrosyl-[protein] + 3'-phosphoadenylyl sulfate = O-sulfo-L-tyrosine-[protein] + adenosine 3',5'-bisphosphate + H(+). In terms of biological role, catalyzes the O-sulfation of tyrosine residues within acidic motifs of polypeptides, using 3'-phosphoadenylyl sulfate (PAPS) as cosubstrate. This Homo sapiens (Human) protein is Protein-tyrosine sulfotransferase 1 (TPST1).